A 402-amino-acid chain; its full sequence is La-related protein 7 homolog (402 aa).

The segment at 64–138 (EPLNPDFLSA…FDNSSHMVIR (75 aa)) is HTH La-type RNA-binding-like region. Residues 148 to 230 (IPLYDRIIYV…LTRKEWTNRE (83 aa)) form an RRM-like region region. Positions 288-400 (DFTKNLLTRI…EEEKNYWRML (113 aa)) are xRRM-like region. The 115-residue stretch at 288 to 402 (DFTKNLLTRI…EKNYWRMLKK (115 aa)) folds into the xRRM domain.

It belongs to the LARP7 family. In terms of assembly, component of the telomerase holoenzyme complex composed minimally of trt1 and the telomerase RNA template component. Interacts with skp1.

The protein resides in the chromosome. It is found in the telomere. Its subcellular location is the nucleus. The protein localises to the cytoplasm. In terms of biological role, RNA-binding protein required for assembly of the holoenzyme telomerase ribonucleoprotein (RNP) complex. Specifically binds telomerase RNA ter1 and promotes assembly of ter1 with catalytic subunit trt1. Telomerase is a ribonucleoprotein enzyme essential that copies new telomeric repeats onto chromosome ends and functions to maintain cell division. This Schizosaccharomyces pombe (strain 972 / ATCC 24843) (Fission yeast) protein is La-related protein 7 homolog.